A 37-amino-acid chain; its full sequence is Large ribosomal subunit protein bL36c (37 aa).

This sequence belongs to the bacterial ribosomal protein bL36 family.

It is found in the plastid. It localises to the chloroplast. The protein is Large ribosomal subunit protein bL36c of Cucumis sativus (Cucumber).